The following is a 292-amino-acid chain: 4-hydroxy-tetrahydrodipicolinate synthase (292 aa).

Threonine 45 contributes to the pyruvate binding site. Tyrosine 133 (proton donor/acceptor) is an active-site residue. Lysine 161 acts as the Schiff-base intermediate with substrate in catalysis. Isoleucine 203 serves as a coordination point for pyruvate.

Belongs to the DapA family. As to quaternary structure, homotetramer; dimer of dimers.

Its subcellular location is the cytoplasm. It carries out the reaction L-aspartate 4-semialdehyde + pyruvate = (2S,4S)-4-hydroxy-2,3,4,5-tetrahydrodipicolinate + H2O + H(+). It participates in amino-acid biosynthesis; L-lysine biosynthesis via DAP pathway; (S)-tetrahydrodipicolinate from L-aspartate: step 3/4. Its function is as follows. Catalyzes the condensation of (S)-aspartate-beta-semialdehyde [(S)-ASA] and pyruvate to 4-hydroxy-tetrahydrodipicolinate (HTPA). The polypeptide is 4-hydroxy-tetrahydrodipicolinate synthase (Salmonella arizonae (strain ATCC BAA-731 / CDC346-86 / RSK2980)).